Consider the following 1832-residue polypeptide: Putative transcription factor capicua (1832 aa).

A phosphoserine mark is found at Ser-41 and Ser-49. 15 disordered regions span residues 66–121, 135–227, 323–353, 389–427, 444–493, 563–619, 690–739, 784–845, 874–938, 1069–1105, 1151–1178, 1457–1602, 1632–1668, 1701–1733, and 1789–1817; these read ANQS…EVGS, STVG…AHPH, QQQQ…NHNN, NQRQ…AAMR, DGAA…IRRP, DRRK…GGQG, RERV…SGGE, QPTG…VSAP, PMHH…EDDE, TSTL…TISC, GQDE…EQVT, DGGM…STAA, QPED…VQKL, LESS…HRKV, and ASCT…SSTS. Residues 96-121 are compositionally biased toward low complexity; it reads NANNNSSNNNTSSSNNNNNSNWEVGS. The segment covering 172-186 has biased composition (pro residues); it reads PPPPPPASLPAPSAP. 3 stretches are compositionally biased toward low complexity: residues 187–203, 211–223, and 323–342; these read PTSG…HATS, QQQH…HQQQ, and QQQQ…QQQQ. A compositionally biased stretch (acidic residues) spans 397 to 408; sequence EEPDDQLDDDVF. The span at 409-422 shows a compositional bias: polar residues; sequence ETTTPGISANSKKQ. A compositionally biased stretch (low complexity) spans 446 to 484; that stretch reads AAGAPATSAAKRRSQSLSALQQQQQQQQQAGAAGTAAGQ. A DNA-binding region (HMG box) is located at residues 490–558; sequence IRRPMNAFMI…AHFKLHPEWK (69 aa). Residues 610–619 show a composition bias toward gly residues; sequence GGSGSCGGQG. The tract at residues 834 to 1832 is interaction with gro; the sequence is GSASGGGVVS…TSAADVFQYY (999 aa). Residues 903–914 are compositionally biased toward basic and acidic residues; it reads ESSEKDKPALDD. Over residues 915–938 the composition is skewed to acidic residues; sequence QERDEVEEEDEDEEDDDEDDEDDE. Residues 1078–1091 are compositionally biased toward polar residues; sequence NPANNEAPNKFSNF. The segment covering 1092-1105 has biased composition (low complexity); it reads PTQHQPTTTTTISC. Residues 1462-1471 are compositionally biased toward low complexity; the sequence is GCASAAASGG. The span at 1503-1525 shows a compositional bias: polar residues; that stretch reads LSQSKSESNVSFGANLGASNGQH. Low complexity predominate over residues 1547–1589; sequence NSSNLSSALPTPTSSTTTPNSDEQLPLTPTTSSSNSNLNQQQP. Phosphothreonine is present on Thr-1716. The segment covering 1724-1733 has biased composition (basic and acidic residues); it reads DASEKGHRKV. Polar residues predominate over residues 1789-1799; it reads ASCTPHSAGPN. The segment covering 1800 to 1817 has biased composition (low complexity); it reads TPSDSNSSSTTLSASSTS.

As to quaternary structure, interacts with gro. In terms of tissue distribution, expressed in the central region of embryos. Also expressed in ovarian follicle cells, the wing imaginal disks and the wing pouch.

It localises to the nucleus. In terms of biological role, transcriptional repressor required for the specification of numerous cell types during embryonic development. Required for terminal patterning of early embryos. May associate with gro to repress tll and hkb, restricting their expression to embryonic terminal poles where they initiate correct development of head and tail structures. Required for dorsoventral patterning of oocytes and early embryos. Cooperates with dl to repress zen and other dorsal specific genes within the embryo and promotes expression of the ventralizing factor pip in ovarian follicle cells. Required during wing development for the specification of intervein areas, where it mediates localized repression of vein specific genes such as aos, dpp and vvl. The sequence is that of Putative transcription factor capicua (cic) from Drosophila melanogaster (Fruit fly).